Consider the following 757-residue polypeptide: Transferrin receptor protein 1 (757 aa).

Topologically, residues 1 to 67 (MMDQARSAIS…KHRRLNGRLC (67 aa)) are cytoplasmic. A mediates interaction with SH3BP4 region spans residues 1–67 (MMDQARSAIS…KHRRLNGRLC (67 aa)). 2 positions are modified to phosphoserine: Ser-10 and Ser-19. A Phosphotyrosine modification is found at Tyr-20. Positions 20-23 (YTRF) match the Endocytosis signal motif. A Phosphothreonine modification is found at Thr-21. Residue Ser-24 is modified to Phosphoserine. The Stop-transfer sequence motif lies at 58 to 61 (KHRR). Cys-67 is lipidated: S-palmitoyl cysteine. Residues 68–88 (FGTIAVVIFFLIGFMIGYLGY) traverse the membrane as a helical; Signal-anchor for type II membrane protein segment. The Extracellular segment spans residues 89–757 (CKRTEQKDCV…GDIWDIDNEF (669 aa)). A glycan (O-linked (GalNAc...) threonine) is linked at Thr-103. The 91-residue stretch at 220-310 (SKATTVSGKL…GTGDPYTPGF (91 aa)) folds into the PA domain. Asn-248 and Asn-314 each carry an N-linked (GlcNAc...) asparagine glycan. A ligand-binding region spans residues 566-757 (NLDTYEKLIQ…GDIWDIDNEF (192 aa)). The Cell attachment site motif lies at 643-645 (RGD). N-linked (GlcNAc...) asparagine glycans are attached at residues Asn-719 and Asn-724.

It belongs to the peptidase M28 family. M28B subfamily. As to quaternary structure, homodimer; disulfide-linked. Binds one transferrin molecule per subunit. Interacts with SH3BP4. Interacts with STEAP3; facilitates TFRC endocytosis in erythroid precursor cells. Stearoylated by ZDHHC6 which inhibits TFRC-mediated activation of the JNK pathway and promotes mitochondrial fragmentation. Stearoylation does not affect iron uptake. In terms of processing, N- and O-glycosylated, phosphorylated and palmitoylated.

The protein localises to the cell membrane. It is found in the melanosome. Functionally, cellular uptake of iron occurs via receptor-mediated endocytosis of ligand-occupied transferrin receptor into specialized endosomes. Endosomal acidification leads to iron release. The apotransferrin-receptor complex is then recycled to the cell surface with a return to neutral pH and the concomitant loss of affinity of apotransferrin for its receptor. Transferrin receptor is necessary for development of erythrocytes and the nervous system. Positively regulates T and B cell proliferation through iron uptake. Acts as a lipid sensor that regulates mitochondrial fusion by regulating activation of the JNK pathway. When dietary levels of stearate (C18:0) are low, promotes activation of the JNK pathway, resulting in HUWE1-mediated ubiquitination and subsequent degradation of the mitofusin MFN2 and inhibition of mitochondrial fusion. When dietary levels of stearate (C18:0) are high, TFRC stearoylation inhibits activation of the JNK pathway and thus degradation of the mitofusin MFN2. Mediates uptake of NICOL1 into fibroblasts where it may regulate extracellular matrix production. This chain is Transferrin receptor protein 1 (TFRC), found in Cricetulus griseus (Chinese hamster).